A 687-amino-acid chain; its full sequence is Translation initiation factor IF-2 (687 aa).

A tr-type G domain is found at 186–355 (KRPPIVTVMG…LLTAEMLELK (170 aa)). The G1 stretch occupies residues 195–202 (GHVDHGKT). A GTP-binding site is contributed by 195 to 202 (GHVDHGKT). Residues 220 to 224 (GITQH) are G2. The tract at residues 241-244 (DTPG) is G3. GTP contacts are provided by residues 241–245 (DTPGH) and 295–298 (NKID). Residues 295-298 (NKID) are G4. The interval 331–333 (SAK) is G5.

It belongs to the TRAFAC class translation factor GTPase superfamily. Classic translation factor GTPase family. IF-2 subfamily.

The protein resides in the cytoplasm. Functionally, one of the essential components for the initiation of protein synthesis. Protects formylmethionyl-tRNA from spontaneous hydrolysis and promotes its binding to the 30S ribosomal subunits. Also involved in the hydrolysis of GTP during the formation of the 70S ribosomal complex. The polypeptide is Translation initiation factor IF-2 (Clostridium botulinum (strain Eklund 17B / Type B)).